Reading from the N-terminus, the 206-residue chain is Small ribosomal subunit protein uS4A (206 aa).

The region spanning 96–156 (GRLDNVVYRM…EKAKKQSRIG (61 aa)) is the S4 RNA-binding domain.

The protein belongs to the universal ribosomal protein uS4 family. As to quaternary structure, part of the 30S ribosomal subunit. Contacts protein S5. The interaction surface between S4 and S5 is involved in control of translational fidelity.

Functionally, one of the primary rRNA binding proteins, it binds directly to 16S rRNA where it nucleates assembly of the body of the 30S subunit. In terms of biological role, with S5 and S12 plays an important role in translational accuracy. The sequence is that of Small ribosomal subunit protein uS4A from Psychromonas ingrahamii (strain DSM 17664 / CCUG 51855 / 37).